A 336-amino-acid chain; its full sequence is Methionyl-tRNA formyltransferase (336 aa).

(6S)-5,6,7,8-tetrahydrofolate is bound at residue S112–P115.

It belongs to the Fmt family.

The catalysed reaction is L-methionyl-tRNA(fMet) + (6R)-10-formyltetrahydrofolate = N-formyl-L-methionyl-tRNA(fMet) + (6S)-5,6,7,8-tetrahydrofolate + H(+). In terms of biological role, attaches a formyl group to the free amino group of methionyl-tRNA(fMet). The formyl group appears to play a dual role in the initiator identity of N-formylmethionyl-tRNA by promoting its recognition by IF2 and preventing the misappropriation of this tRNA by the elongation apparatus. The sequence is that of Methionyl-tRNA formyltransferase from Trichodesmium erythraeum (strain IMS101).